Here is a 446-residue protein sequence, read N- to C-terminus: High mobility group B protein 13 (446 aa).

Disordered stretches follow at residues 1–43 (MSTV…TKSF) and 110–130 (LAQT…AETK). Positions 11–22 (AKKSRNSRKALK) are enriched in basic residues. 2 consecutive DNA-binding regions (HMG box) follow at residues 129–197 (TKRP…TKEK) and 246–312 (PKQP…EGYK). Positions 349-371 (NIIKKTKETAKNKKKNENVDPNK) are enriched in basic and acidic residues. A disordered region spans residues 349-377 (NIIKKTKETAKNKKKNENVDPNKPKKPTS). A DNA-binding region (HMG box 3) is located at residues 372–440 (PKKPTSSYFL…AYKKEVEEYN (69 aa)).

The protein belongs to the HMGB family.

The protein resides in the nucleus. The sequence is that of High mobility group B protein 13 (HMGB13) from Arabidopsis thaliana (Mouse-ear cress).